Consider the following 569-residue polypeptide: Serine/threonine-protein kinase gad8 (569 aa).

The segment at 19–63 (GLNSGGSSFTRGLKNSTLSSTSSRKSSDEKSRKSSEDKRSPQSTV) is disordered. Residues 31-42 (LKNSTLSSTSSR) show a composition bias toward low complexity. The span at 43–58 (KSSDEKSRKSSEDKRS) shows a compositional bias: basic and acidic residues. The C2 domain occupies 45-202 (SDEKSRKSSE…IVNKLTDEWV (158 aa)). One can recognise a Protein kinase domain in the interval 230 to 485 (FELLKVVGKG…AQEIKNHPFF (256 aa)). ATP-binding positions include 236-244 (VGKGSFGKV) and K259. The active-site Proton acceptor is the D353. T387 is subject to Phosphothreonine; by ksg1. One can recognise an AGC-kinase C-terminal domain in the interval 486 to 557 (DDIDWKKLCA…QRPTTIDTSD (72 aa)). S527 and S546 each carry phosphoserine; by TORC2.

This sequence belongs to the protein kinase superfamily. AGC Ser/Thr protein kinase family. Post-translationally, phosphorylated by ksg1 and target of rapamycin complex 2 (TORC2), affecting the kinase activity of gad8 in a nutrient-dependent manner.

It carries out the reaction L-seryl-[protein] + ATP = O-phospho-L-seryl-[protein] + ADP + H(+). It catalyses the reaction L-threonyl-[protein] + ATP = O-phospho-L-threonyl-[protein] + ADP + H(+). Functionally, involved in a signaling module for sexual development and cell growth under stressed conditions. Required for G1 arrest under nitrogen starvation and for growth at high temperature and osmolarity. The polypeptide is Serine/threonine-protein kinase gad8 (Schizosaccharomyces pombe (strain 972 / ATCC 24843) (Fission yeast)).